The chain runs to 360 residues: 3-dehydroquinate synthase (360 aa).

NAD(+) contacts are provided by residues 104–108 (GVIGD), 128–129 (TT), K141, and 168–171 (FLDT). Zn(2+) contacts are provided by E183, H243, and H260.

Belongs to the sugar phosphate cyclases superfamily. Dehydroquinate synthase family. The cofactor is Co(2+). Zn(2+) serves as cofactor. NAD(+) is required as a cofactor.

It localises to the cytoplasm. The enzyme catalyses 7-phospho-2-dehydro-3-deoxy-D-arabino-heptonate = 3-dehydroquinate + phosphate. It functions in the pathway metabolic intermediate biosynthesis; chorismate biosynthesis; chorismate from D-erythrose 4-phosphate and phosphoenolpyruvate: step 2/7. Its function is as follows. Catalyzes the conversion of 3-deoxy-D-arabino-heptulosonate 7-phosphate (DAHP) to dehydroquinate (DHQ). The chain is 3-dehydroquinate synthase from Streptococcus equi subsp. equi (strain 4047).